The sequence spans 235 residues: Small ribosomal subunit protein uS3 (235 aa).

A KH type-2 domain is found at 39–107 (VRQFLNKELA…PAQINIAEVK (69 aa)). Low complexity predominate over residues 215-226 (AQQPEQQPATPK). Residues 215-235 (AQQPEQQPATPKKAPRGKGRK) form a disordered region.

Belongs to the universal ribosomal protein uS3 family. In terms of assembly, part of the 30S ribosomal subunit. Forms a tight complex with proteins S10 and S14.

Its function is as follows. Binds the lower part of the 30S subunit head. Binds mRNA in the 70S ribosome, positioning it for translation. This is Small ribosomal subunit protein uS3 from Histophilus somni (strain 129Pt) (Haemophilus somnus).